An 859-amino-acid chain; its full sequence is Leucine--tRNA ligase (859 aa).

The 'HIGH' region signature appears at 42-52 (PYPSGRLHMGH). The 'KMSKS' region signature appears at 618–622 (KMSKS). K621 contributes to the ATP binding site.

The protein belongs to the class-I aminoacyl-tRNA synthetase family.

Its subcellular location is the cytoplasm. It carries out the reaction tRNA(Leu) + L-leucine + ATP = L-leucyl-tRNA(Leu) + AMP + diphosphate. This Shewanella baltica (strain OS223) protein is Leucine--tRNA ligase.